A 773-amino-acid chain; its full sequence is MIITKSWLNDWLELEEISSDKIAKTLNSIGIEVDRVGALKAPDKVVVGYVKEKIKHENSDKLSICQVDIGSETLQIVCGAANVDAGQFVAVATKGAIMSNGMEIKEAKLRGVDSCGMLCSSLELGFEKINEGIMLLDESIGKLELGRPLNTYEIFNDELIEVELTPNRGDCLSIYGIARDLAAALNLNLKEPKPFKESENVLGIGRILRLAAEKELNGLYNYRAIGLKEEIQTNLLLSLRLAQIEGLGKNSIENLLNYATHSTGVLFNAYDLSSFSEKDEEFTINLSKQVHGETKVSYKDKLLSFSGIFQNNESRCKDDSKIIIIEANYTDPLVIADAKIYHKDQDEKMLYRSFRGSEPKLNLGMDFLLGIFEQIPNLVIYSSSQQILTDKELPIIPISIEGISDIIGQNVDKDEVLKILKKLGFELILSGEGLINVKAPLHRPDIKNLSDICEEVVRIIGIDNIASKGLEFIEKNRLNSAYKNYIEFLNLRKRAVASGYFESLHYVLDNGEELKRLGFDSVKLKLINPITAELNTLRTTLLNHLLNAASLNAKNSKKIIKLFELGAVFNVNNQELNRIAFIHSGLKEEAKISNKAKPESVQFYDFLLDIKNIIGDFKLKSSKYNILSPYEQADIYLSDIKVGFIGRLHLKIENERDLPKTYICELDLDLIRQDFKIAKPYSKFPAITRDLSVLIPKGFEYNQIKNCIEELNLEILENFRLVDIYSDENLKEFYSITISFSFRDINKTLEDNQVNECMDKILNTLKNLGLDLR.

Positions 39-150 constitute a tRNA-binding domain; that stretch reads LKAPDKVVVG…GKLELGRPLN (112 aa). Residues 391–467 enclose the B5 domain; it reads KELPIIPISI…RIIGIDNIAS (77 aa). Positions 445, 451, 454, and 455 each coordinate Mg(2+). An FDX-ACB domain is found at 682-773; the sequence is SKFPAITRDL…TLKNLGLDLR (92 aa).

Belongs to the phenylalanyl-tRNA synthetase beta subunit family. Type 1 subfamily. As to quaternary structure, tetramer of two alpha and two beta subunits. The cofactor is Mg(2+).

It is found in the cytoplasm. It carries out the reaction tRNA(Phe) + L-phenylalanine + ATP = L-phenylalanyl-tRNA(Phe) + AMP + diphosphate + H(+). This Campylobacter jejuni subsp. jejuni serotype O:2 (strain ATCC 700819 / NCTC 11168) protein is Phenylalanine--tRNA ligase beta subunit (pheT).